Consider the following 746-residue polypeptide: Ribosome biogenesis protein BOP1 (746 aa).

The interval 1–116 (MAGSRGAGRT…PCPRTEMASA (116 aa)) is disordered. Positions 43–65 (SHSTGSDSGVSDSEESVFSGLED) are enriched in low complexity. Positions 66-87 (SGSDSSEDDDEGDEEGEDGALD) are enriched in acidic residues. Positions 88-99 (DEGHSGIKKTTE) are enriched in basic and acidic residues. T106 is modified (phosphothreonine). Y122 carries the phosphotyrosine modification. Phosphoserine is present on residues S126 and S127. Residues 265–427 (MGWIQPRRPR…CLSVSPGGQW (163 aa)) form a sufficient for nucleolar localization region. WD repeat units follow at residues 411–450 (GHSD…CVRT), 452–492 (PVGG…RLVA), 532–576 (CHGK…SPFR), 577–615 (RSHG…LTKK), 618–657 (PNCK…KPYR), 661–700 (HHKK…DLLQ), and 716–746 (TRDL…RLFT).

The protein belongs to the WD repeat BOP1/ERB1 family. Component of the PeBoW complex, composed of BOP1, PES1 and WDR12. The complex is held together by BOP1, which interacts with PES1 via its N-terminal domain and with WDR12 via a high-affinity interaction between the seven-bladed beta-propeller domains of the 2 proteins. The NOP7 complex associates with the 66S pre-ribosome. The PeBoW complex associates with DDX27, BOP1 interacts directly with DDX27.

The protein resides in the nucleus. Its subcellular location is the nucleolus. The protein localises to the nucleoplasm. Its function is as follows. Component of the PeBoW complex, which is required for maturation of 28S and 5.8S ribosomal RNAs and formation of the 60S ribosome. The polypeptide is Ribosome biogenesis protein BOP1 (Homo sapiens (Human)).